The sequence spans 314 residues: 3'-5' exoribonuclease YhaM (314 aa).

The 117-residue stretch at 163-279 (HVVSMLDLAK…LHYIDNLDAK (117 aa)) folds into the HD domain.

The protein belongs to the YhaM family.

Shows a 3'-5' exoribonuclease activity. The polypeptide is 3'-5' exoribonuclease YhaM (Bacillus cereus (strain AH820)).